The sequence spans 2481 residues: Serine/threonine-protein kinase TOR (2481 aa).

The interval 1–31 (MSTSSQSFVAGRPASMASPSQSHRFCGPSAT) is disordered. HEAT repeat units follow at residues 205-242 (VHVP…VIEK), 292-329 (SRYR…FLRD), 373-410 (HYLP…AMGS), 434-471 (DALD…SQAK), 569-607 (RLVE…FDDY), 608-645 (LAQA…KNPA), 737-775 (QYIP…STGY), and 781-819 (KEYP…LDPH). The disordered stretch occupies residues 823–847 (RNQQSLSGSHGEVPRGTGDSGQPIP). 6 HEAT repeats span residues 866 to 904 (YYST…SMGL), 908 to 945 (PYLP…IVRQ), 952 to 992 (PELL…ALND), 996 to 1036 (TYLP…GTLD), 1037 to 1075 (EHMH…CVQV), and 1077 to 1114 (GHIS…ALGE). Residues 1179 to 1204 (DPFEEGTDRNHQVNDGRLRTAGEASQ) form a disordered region. Basic and acidic residues predominate over residues 1184–1198 (GTDRNHQVNDGRLRT). The 579-residue stretch at 1309–1887 (LLGALAEKCR…MYPLLVACKS (579 aa)) folds into the FAT domain. 2 short sequence motifs (nuclear localization signal) span residues 1505-1512 (VRRAKYDE) and 2075-2080 (KQRPRK). One can recognise a PI3K/PI4K catalytic domain in the interval 2065–2378 (FSRQLVVITS…DEDPADIDLP (314 aa)). Residues 2071–2077 (VITSKQR) are G-loop. The catalytic loop stretch occupies residues 2244–2252 (GLGDRHPSN). The activation loop stretch occupies residues 2264–2289 (HIDFGDCFEASMNREKFPEKVPFRLT). The disordered stretch occupies residues 2354 to 2384 (NNNPNAPADVEPDEEDEDPADIDLPQPQRST). Acidic residues predominate over residues 2363 to 2374 (VEPDEEDEDPAD). Ser2424 carries the post-translational modification Phosphoserine. In terms of domain architecture, FATC spans 2449–2481 (HGLSVKVQVQKLINQATSHENLCQNYVGWCPFW).

It belongs to the PI3/PI4-kinase family. Interacts with RAPTOR1 and itself. Interacts with FKBP12 in a rapamycin-dependent manner. Binds to LST8-1. Hyperactivated upon interaction with cauliflower mosaic virus (CaMV) Tav protein. Post-translationally, activated by phosphorylation on Ser-2424 triggered by cauliflower mosaic virus P6 and auxin. As to expression, highly expressed in root meristems, shoot apical meristem (SAM) and floral buds.

The protein resides in the cytoplasm. The protein localises to the nucleus. The enzyme catalyses L-seryl-[protein] + ATP = O-phospho-L-seryl-[protein] + ADP + H(+). It carries out the reaction L-threonyl-[protein] + ATP = O-phospho-L-threonyl-[protein] + ADP + H(+). With respect to regulation, almost insensitive to rapamycin. Strongly repressed by specific active site inhibitors (asTORis) such as AZD-8055, TORIN2 and WYE-132, and, to a lesser extent, by KU63794, WYE-354 and TORIN1, leading to impaired photoautotrophic growth and abnormally early meristematic cells differentiation. Repression by TORIN1 leads to impaired responses to auxin, including gravitropism. Combined treatment with rapamycin and active-site inhibitors (e.g. Torin1 and AZD-8055) results in synergistic inhibition of activity and plant growth. Inhibition by KU63794 leads to reduced auxin content in root tips. AZD-8055 treatment reduces abscisic acid (ABA) levels. In addition, inhibition by AZD-8055 leads to a strong reduction of watermelon mosaic virus (WMV) infection. In terms of biological role, essential cell growth regulator that controls development from early embryo to seed production. Controls plant growth in environmental stress conditions. Acts through the phosphorylation of downstream effectors that are recruited by the binding partner RAPTOR. Acts by activating transcription, protein synthesis and ribosome biogenesis, and inhibiting mRNA degradation and autophagy. Can phosphorylate TAP46, a regulatory subunit of protein phosphatase 2A that modulates cell growth and survival. Involved in modulating the transition from heterotrophic to photoautotrophic growth by regulating the expression of chloroplast- and photosynthesis-associated genes. Essential for auxin signaling transduction, probably acting in polysomes to maintain the active ATPK1/S6K1 (and thus TIF3H1/eIF3h) phosphorylation status that is critical for translation reinitiation (e.g. uORF-mRNAs loading). Promotes abscisic acid (ABA) biosynthesis. Involved in the regulation of sugar-mediated (e.g. glucose and sucrose) glycolysis- and mitochondrial bioenergetics-dependent root growth promotion. Required for sugar (e.g. glucose) promotion of hypocotyl elongation in the dark, by activating the brassinosteroid pathway and stabilizing BZR1. The regulation of BZR1 degradation is dependent on autophagy. Regulates the expression, phosphorylation and ribosome association of MRFs (e.g. MRF1, MRF3 and MRF4), especially under energy-deficient conditions. Its function is as follows. (Microbial infection) Binding to cauliflower mosaic virus (CaMV) Tav protein is critical for both translation reinitiation and viral fitness. When activated by CaMV P6, promotes CaMV translation by inhibiting cellular autophagy and suppressing both silencing and innate immunity, thus conferring sensitivity to P.syringae. (Microbial infection) Required during infection by some potyvirus such as Watermelon mosaic virus (WMV) but not for turnip mosaic virus (TuMV). The protein is Serine/threonine-protein kinase TOR of Arabidopsis thaliana (Mouse-ear cress).